The chain runs to 384 residues: S-adenosylmethionine synthase (384 aa).

His15 contacts ATP. Asp17 contacts Mg(2+). K(+) is bound at residue Glu43. Residues Glu56 and Gln99 each contribute to the L-methionine site. A flexible loop region spans residues 99 to 109 (QSPDINQGVDR). ATP contacts are provided by residues 164 to 166 (DAK), 230 to 231 (RF), Asp239, 245 to 246 (RK), Ala262, and Lys266. An L-methionine-binding site is contributed by Asp239. Lys270 serves as a coordination point for L-methionine.

It belongs to the AdoMet synthase family. In terms of assembly, homotetramer; dimer of dimers. Requires Mg(2+) as cofactor. The cofactor is K(+).

It localises to the cytoplasm. The catalysed reaction is L-methionine + ATP + H2O = S-adenosyl-L-methionine + phosphate + diphosphate. It functions in the pathway amino-acid biosynthesis; S-adenosyl-L-methionine biosynthesis; S-adenosyl-L-methionine from L-methionine: step 1/1. Catalyzes the formation of S-adenosylmethionine (AdoMet) from methionine and ATP. The overall synthetic reaction is composed of two sequential steps, AdoMet formation and the subsequent tripolyphosphate hydrolysis which occurs prior to release of AdoMet from the enzyme. The protein is S-adenosylmethionine synthase of Photobacterium profundum (strain SS9).